We begin with the raw amino-acid sequence, 815 residues long: MVVMKKKRILIVSAIVLLFLTVASAVTVFSADGDTTTQPKVEKAGGVELKVKRFPISRYQANNEASDDLIKGAFVGLTNVTFSFAGNIVRVVDTGMDILYNLQPIDEFANSITNVSKTVYKTLKKNFGEALFIFTCAYVVYLFCVRGSVKEAMRRSILFICVMVIGGLWMSNAGYYMKVLNALSVEAQGKLLTAGNGLVGIVQDEGNFADSSAIEKGKEMEGTVAVMRNLYFDIALMKPFLIVNFDETSEKKINEEDTDKGGLNRIDKLLSYKLSEDGEKDKKDYIKETEIDDYKNESMTSGNVFNQLGESFIAVVASIVIGIPFLALAFFNFLLQVVALVIVFFVPFAFILAYVPQLAYSGFVTLGRLGSVYLLKAMLGVIVLFVYVTCFIVDKLIPPNGFGMYLLNVAVLASILWIGFHKRDAIIKFVTAGKVVSVDNNMMENMRQNIVQPAWEQAKKIGGVWGNGGGVFTDFTKHFGGRKDGSNADGVTGAPSGGGNSPSGTAMGYDNTHAISRTPQKETANGIANHNSRSLKRNPQTLSKEQEKQKQKEAFANAKENKQQSHLARLRKDGINSPMLKDALNEGNEDLSKRAPILQDKKDESARTDQKEYVEQLLKQPNNQQQTDDASLQHEEESTSNRAPVLQENEKDTERTDQKAYIYDEQNQNLETDQQQDFEVQKDDSVSNSEPVAQEKTAEIKRSDQKVMMNQPEPQLGFESPQSTKVENQPIANNERKIRPSEPAKVHSDGIRVDEKQAVAPAENKTVSREKQPSSQTIKRTEQSVNSFDQVSLNEIARRSSSKVEDRLRRDERTR.

An N-terminal signal peptide occupies residues 1-25; that stretch reads MVVMKKKRILIVSAIVLLFLTVASA. 6 helical membrane passes run 127–147, 157–177, 311–331, 333–353, 372–392, and 401–421; these read FGEA…CVRG, ILFI…GYYM, SFIA…LAFF, FLLQ…FILA, VYLL…TCFI, and GFGM…IGFH. Residues 483–815 are disordered; it reads KDGSNADGVT…DRLRRDERTR (333 aa). The span at 513–543 shows a compositional bias: polar residues; it reads HAISRTPQKETANGIANHNSRSLKRNPQTLS. Basic and acidic residues-rich tracts occupy residues 544 to 563 and 599 to 614; these read KEQE…ENKQ and QDKK…KEYV. Over residues 619 to 630 the composition is skewed to polar residues; sequence KQPNNQQQTDDA. Residues 648-658 are compositionally biased toward basic and acidic residues; sequence ENEKDTERTDQ. Positions 665-678 are enriched in polar residues; sequence EQNQNLETDQQQDF. Residues 696 to 705 show a composition bias toward basic and acidic residues; the sequence is KTAEIKRSDQ. Residues 720–732 are compositionally biased toward polar residues; it reads SPQSTKVENQPIA. Residues 734–757 show a composition bias toward basic and acidic residues; that stretch reads NERKIRPSEPAKVHSDGIRVDEKQ. Positions 773–793 are enriched in polar residues; sequence PSSQTIKRTEQSVNSFDQVSL. Positions 796–815 are enriched in basic and acidic residues; it reads IARRSSSKVEDRLRRDERTR.

Its subcellular location is the cell membrane. This is an uncharacterized protein from Bacillus subtilis (strain 168).